Here is a 277-residue protein sequence, read N- to C-terminus: Uridine-cytidine kinase 1 (277 aa).

Positions 1-30 (MASAGGGGSESAAPEADRPQPRPFLIGVSG) are disordered. 30-38 (GGTASGKST) is a binding site for ATP. Substrate is bound by residues D87, Y115, H120, R169, R178, and Q186. Residue D215 coordinates ATP. Residues 238-250 (RHRGGPNGRNHKR) are compositionally biased toward basic residues. The interval 238 to 277 (RHRGGPNGRNHKRTFPEPGDHPGVLATGKRSHLESSSRPH) is disordered. T251 is modified (phosphothreonine). Over residues 268 to 277 (SHLESSSRPH) the composition is skewed to basic and acidic residues.

It belongs to the uridine kinase family.

The catalysed reaction is uridine + ATP = UMP + ADP + H(+). The enzyme catalyses cytidine + ATP = CMP + ADP + H(+). Its pathway is pyrimidine metabolism; CTP biosynthesis via salvage pathway; CTP from cytidine: step 1/3. It participates in pyrimidine metabolism; UMP biosynthesis via salvage pathway; UMP from uridine: step 1/1. Phosphorylates uridine and cytidine to uridine monophosphate and cytidine monophosphate. Does not phosphorylate deoxyribonucleosides or purine ribonucleosides. Can use ATP or GTP as a phosphate donor. This Mus musculus (Mouse) protein is Uridine-cytidine kinase 1 (Uck1).